The following is a 30-amino-acid chain: 2S seed storage-like protein (30 aa).

It belongs to the 2S seed storage albumins family. In terms of assembly, the mature protein is a heterodimer of a small and a large chain linked by 2 disulfide bonds. In terms of tissue distribution, extracted from castor bean.

Its function is as follows. This is a 2S seed storage protein. Inhibits spore germination in R.solani and F.oxysporum. Exhibits anti-trypsin activity. The chain is 2S seed storage-like protein from Ricinus communis (Castor bean).